Consider the following 158-residue polypeptide: Large ribosomal subunit protein bL21 (158 aa).

Positions 127–158 are disordered; it reads TQETKSAASVKKAAKKSAPQKQAAVASNSKED. Residues 131–158 show a composition bias toward low complexity; it reads KSAASVKKAAKKSAPQKQAAVASNSKED.

This sequence belongs to the bacterial ribosomal protein bL21 family. In terms of assembly, part of the 50S ribosomal subunit. Contacts protein L20.

This protein binds to 23S rRNA in the presence of protein L20. The sequence is that of Large ribosomal subunit protein bL21 from Bartonella henselae (strain ATCC 49882 / DSM 28221 / CCUG 30454 / Houston 1) (Rochalimaea henselae).